The primary structure comprises 299 residues: Protoheme IX farnesyltransferase 1 (299 aa).

9 helical membrane-spanning segments follow: residues 25–45, 47–67, 95–115, 119–139, 147–167, 173–193, 217–237, 243–263, and 279–299; these read VVVL…RAGV, WSVL…AAVV, LPAL…LLAF, LTAW…TGFL, IVIG…AVSG, PLLL…ALAI, ALHI…PYAI, LYLA…WVLY, and IGYL…LLNL.

This sequence belongs to the UbiA prenyltransferase family. Protoheme IX farnesyltransferase subfamily.

The protein resides in the cell inner membrane. The enzyme catalyses heme b + (2E,6E)-farnesyl diphosphate + H2O = Fe(II)-heme o + diphosphate. It participates in porphyrin-containing compound metabolism; heme O biosynthesis; heme O from protoheme: step 1/1. Functionally, converts heme B (protoheme IX) to heme O by substitution of the vinyl group on carbon 2 of heme B porphyrin ring with a hydroxyethyl farnesyl side group. This chain is Protoheme IX farnesyltransferase 1, found in Pseudomonas entomophila (strain L48).